Consider the following 246-residue polypeptide: Bis(5'-nucleosyl)-tetraphosphatase PrpE [asymmetrical] (246 aa).

Belongs to the PrpE family. Requires Ni(2+) as cofactor.

The enzyme catalyses P(1),P(4)-bis(5'-guanosyl) tetraphosphate + H2O = GMP + GTP + 2 H(+). Its function is as follows. Asymmetrically hydrolyzes Ap4p to yield AMP and ATP. This chain is Bis(5'-nucleosyl)-tetraphosphatase PrpE [asymmetrical], found in Bacillus mycoides (strain KBAB4) (Bacillus weihenstephanensis).